Reading from the N-terminus, the 145-residue chain is Cell division protein SepF (145 aa).

This sequence belongs to the SepF family. As to quaternary structure, homodimer. Interacts with FtsZ.

The protein resides in the cytoplasm. Functionally, cell division protein that is part of the divisome complex and is recruited early to the Z-ring. Probably stimulates Z-ring formation, perhaps through the cross-linking of FtsZ protofilaments. Its function overlaps with FtsA. This is Cell division protein SepF from Lactobacillus helveticus (strain DPC 4571).